The sequence spans 488 residues: Catalase (488 aa).

The interval 1 to 24 is disordered; that stretch reads MTERKNLTTNQGTPVGDNQNSMTA. The segment covering 7–23 has biased composition (polar residues); sequence LTTNQGTPVGDNQNSMT. Catalysis depends on residues H55 and N128. A heme-binding site is contributed by Y338.

The protein belongs to the catalase family. Heme is required as a cofactor.

The protein resides in the cytoplasm. The catalysed reaction is 2 H2O2 = O2 + 2 H2O. Functionally, decomposes hydrogen peroxide into water and oxygen; serves to protect cells from the toxic effects of hydrogen peroxide. This chain is Catalase (kat), found in Listeria innocua serovar 6a (strain ATCC BAA-680 / CLIP 11262).